Consider the following 109-residue polypeptide: Probable cytochrome b-c1 complex subunit 7 (109 aa).

The protein belongs to the UQCRB/QCR7 family. In terms of assembly, component of the ubiquinol-cytochrome c oxidoreductase (cytochrome b-c1 complex, complex III, CIII), a multisubunit enzyme composed of 3 respiratory subunits cytochrome b, cytochrome c1 and Rieske protein, 2 core protein subunits, and additional low-molecular weight protein subunits. The complex exists as an obligatory dimer and forms supercomplexes (SCs) in the inner mitochondrial membrane with cytochrome c oxidase (complex IV, CIV).

It localises to the mitochondrion inner membrane. Component of the ubiquinol-cytochrome c oxidoreductase, a multisubunit transmembrane complex that is part of the mitochondrial electron transport chain which drives oxidative phosphorylation. The respiratory chain contains 3 multisubunit complexes succinate dehydrogenase (complex II, CII), ubiquinol-cytochrome c oxidoreductase (cytochrome b-c1 complex, complex III, CIII) and cytochrome c oxidase (complex IV, CIV), that cooperate to transfer electrons derived from NADH and succinate to molecular oxygen, creating an electrochemical gradient over the inner membrane that drives transmembrane transport and the ATP synthase. The cytochrome b-c1 complex catalyzes electron transfer from ubiquinol to cytochrome c, linking this redox reaction to translocation of protons across the mitochondrial inner membrane, with protons being carried across the membrane as hydrogens on the quinol. In the process called Q cycle, 2 protons are consumed from the matrix, 4 protons are released into the intermembrane space and 2 electrons are passed to cytochrome c. This Dictyostelium discoideum (Social amoeba) protein is Probable cytochrome b-c1 complex subunit 7.